Here is a 799-residue protein sequence, read N- to C-terminus: Sodium- and chloride-dependent glycine transporter 2 (799 aa).

The disordered stretch occupies residues 1 to 64; sequence MDCSAPKEMN…RSASTGAQTF (64 aa). The Cytoplasmic portion of the chain corresponds to 1 to 201; sequence MDCSAPKEMN…ARGNWSSKLD (201 aa). Residues 40 to 57 show a composition bias toward low complexity; the sequence is PAAAPAAAVQPPRVPRSA. Serine 58 carries the phosphoserine modification. At threonine 59 the chain carries Phosphothreonine. Position 86 is a phosphoserine (serine 86). The next 3 membrane-spanning stretches (helical) occupy residues 202 to 222, 230 to 249, and 273 to 293; these read FILSMVGYAVGLGNVWRFPYL, AFLIPYLMMLALAGLPIFFL, and GCGIAMLIISVLIAIYYNVII. Residues glycine 208, alanine 210, valine 211, and asparagine 215 each contribute to the Na(+) site. At 294 to 395 the chain is on the extracellular side; it reads CYTLFYLFAS…AGIEYPGEIR (102 aa). Cysteines 313 and 322 form a disulfide. Asparagine 345, asparagine 355, asparagine 360, and asparagine 366 each carry an N-linked (GlcNAc...) asparagine glycan. Helical transmembrane passes span 396-414, 423-440, 476-493, 505-526, and 559-578; these read WPLAFCLFLAWVIVYASLA, VVYFTATFPYVVLVILLI, IFFSLSAAWGGLITLSSY, LIVTCTNSATSIFAGFVIFSVI, and LPLSPFWAIIFFLMLLTLGL. Na(+)-binding residues include serine 479, asparagine 511, leucine 576, and aspartate 579. A run of 4 helical transmembrane segments spans residues 606-624, 640-660, 681-700, and 719-737; these read VFTLGCCICFFIMGFPMIT, SYALVIIAIFELVGISYVYGL, VCWAFVTPTILTFILCFSFY, and LGWLMLACSVIWIPIMFVI. The Cytoplasmic portion of the chain corresponds to 738–799; sequence KMYLAPGRFI…VKDLELGTQC (62 aa).

This sequence belongs to the sodium:neurotransmitter symporter (SNF) (TC 2.A.22) family. SLC6A5 subfamily. Post-translationally, N-glycosylated. In terms of tissue distribution, specifically expressed in spinal cord, brain stem, and to a lesser extent in the cerebellum.

It is found in the cell membrane. It catalyses the reaction glycine(out) + chloride(out) + 3 Na(+)(out) = glycine(in) + chloride(in) + 3 Na(+)(in). Sodium- and chloride-dependent glycine transporter. Terminates the action of glycine by its high affinity sodium-dependent reuptake into presynaptic terminals. May be responsible for the termination of neurotransmission at strychnine-sensitive glycinergic synapses. In Rattus norvegicus (Rat), this protein is Sodium- and chloride-dependent glycine transporter 2 (Slc6a5).